Here is a 207-residue protein sequence, read N- to C-terminus: Cytochrome c biogenesis ATP-binding export protein CcmA (207 aa).

An ABC transporter domain is found at 2–204 (LEVKNLTAIR…NPKLRKIRLG (203 aa)). 34–41 (GRNGTGKT) is an ATP binding site.

Belongs to the ABC transporter superfamily. CcmA exporter (TC 3.A.1.107) family. In terms of assembly, the complex is composed of two ATP-binding proteins (CcmA) and two transmembrane proteins (CcmB).

It is found in the cell inner membrane. It catalyses the reaction heme b(in) + ATP + H2O = heme b(out) + ADP + phosphate + H(+). Functionally, part of the ABC transporter complex CcmAB involved in the biogenesis of c-type cytochromes; once thought to export heme, this seems not to be the case, but its exact role is uncertain. Responsible for energy coupling to the transport system. The polypeptide is Cytochrome c biogenesis ATP-binding export protein CcmA (Vibrio cholerae serotype O1 (strain ATCC 39315 / El Tor Inaba N16961)).